Consider the following 401-residue polypeptide: MKTLKDLGDLKGKRVLVRADFNVPLDGTTITDDGRIKAALPTIKTLREEGAKVILMAHLGRPKGKVVPELSLAPVAARLGELLGANVPLAKDTYGEDAQAKVAAMNDGDVVLLENVRFNPEETSKDADERAAYAKKIAALGEAFVSDGFGVVHRAQGSNYDVAADLPAAAGLLVEKEVKALSKATENPERPFTVVLGGSKVSDKLGVIENLLDKANRLVIGGGMVFTFLKAKGYEVGTSLLEEDQLEKVKGYIETAEKNGVELVLPTDVVVNAGFPAGDTPVAPEVVAADAIPADKMGLDIGPESQKLFHDKIVDSKTVVWNGPMGVFEVPEFAAGTKAVAQGLVDATAVGAFTIVGGGDSASAVRNLGFPEDGFSHISTGGGASLEFLEGKELPGLKVLE.

Substrate-binding positions include 20–22 (DFN), Arg-35, 58–61 (HLGR), Arg-117, and Arg-154. Residues Lys-204, Gly-298, Glu-329, and 358 to 361 (GGDS) contribute to the ATP site.

It belongs to the phosphoglycerate kinase family. In terms of assembly, monomer.

It localises to the cytoplasm. The enzyme catalyses (2R)-3-phosphoglycerate + ATP = (2R)-3-phospho-glyceroyl phosphate + ADP. It participates in carbohydrate degradation; glycolysis; pyruvate from D-glyceraldehyde 3-phosphate: step 2/5. In Bifidobacterium longum (strain NCC 2705), this protein is Phosphoglycerate kinase.